The following is an 87-amino-acid chain: Translation initiation factor IF-1 2 (87 aa).

In terms of domain architecture, S1-like spans 1-72 (MAKEEVIEME…TKGRINFRHK (72 aa)).

It belongs to the IF-1 family. Component of the 30S ribosomal translation pre-initiation complex which assembles on the 30S ribosome in the order IF-2 and IF-3, IF-1 and N-formylmethionyl-tRNA(fMet); mRNA recruitment can occur at any time during PIC assembly.

The protein resides in the cytoplasm. Functionally, one of the essential components for the initiation of protein synthesis. Stabilizes the binding of IF-2 and IF-3 on the 30S subunit to which N-formylmethionyl-tRNA(fMet) subsequently binds. Helps modulate mRNA selection, yielding the 30S pre-initiation complex (PIC). Upon addition of the 50S ribosomal subunit IF-1, IF-2 and IF-3 are released leaving the mature 70S translation initiation complex. This Thiobacillus denitrificans (strain ATCC 25259 / T1) protein is Translation initiation factor IF-1 2.